The primary structure comprises 212 residues: Agglutinin isolectin 1 (212 aa).

The first 26 residues, 1 to 26 (MKMMSTRALALGAAAVLAFAAATAQA), serve as a signal peptide directing secretion. The residue at position 27 (Gln27) is a Pyrrolidone carboxylic acid. 4 Chitin-binding type-1 domains span residues 27 to 68 (QRCG…ACWT), 69 to 111 (SKRC…PCRA), 112 to 154 (DIKC…ACST), and 155 to 197 (DKPC…GCDG). Cystine bridges form between Cys29–Cys44, Cys38–Cys50, Cys43–Cys57, Cys61–Cys66, Cys72–Cys87, Cys81–Cys93, Cys86–Cys100, Cys104–Cys109, Cys115–Cys130, Cys124–Cys136, Cys129–Cys143, Cys147–Cys152, Cys158–Cys173, Cys167–Cys179, Cys172–Cys186, and Cys190–Cys195. Substrate is bound at residue 36–38 (MEC). A substrate-binding site is contributed by 88 to 99 (SQYGYCGFGAEY). 140–141 (SE) contacts substrate. A propeptide spanning residues 198-212 (VFAEAITANSTLLQE) is cleaved from the precursor.

As to quaternary structure, homodimer, u-shaped.

Its function is as follows. N-acetyl-D-glucosamine / N-acetyl-D-neuraminic acid binding lectin. The polypeptide is Agglutinin isolectin 1 (Triticum aestivum (Wheat)).